Consider the following 269-residue polypeptide: Tryptophan synthase alpha chain (269 aa).

Catalysis depends on proton acceptor residues E49 and D60.

This sequence belongs to the TrpA family. As to quaternary structure, tetramer of two alpha and two beta chains.

It catalyses the reaction (1S,2R)-1-C-(indol-3-yl)glycerol 3-phosphate + L-serine = D-glyceraldehyde 3-phosphate + L-tryptophan + H2O. It functions in the pathway amino-acid biosynthesis; L-tryptophan biosynthesis; L-tryptophan from chorismate: step 5/5. Functionally, the alpha subunit is responsible for the aldol cleavage of indoleglycerol phosphate to indole and glyceraldehyde 3-phosphate. This is Tryptophan synthase alpha chain from Actinobacillus pleuropneumoniae serotype 7 (strain AP76).